The following is a 443-amino-acid chain: Tol-Pal system protein TolB (443 aa).

The signal sequence occupies residues 1-33 (MKIGIINTKIRTVFSAFACMIAASLVCTMPARA).

This sequence belongs to the TolB family. As to quaternary structure, the Tol-Pal system is composed of five core proteins: the inner membrane proteins TolA, TolQ and TolR, the periplasmic protein TolB and the outer membrane protein Pal. They form a network linking the inner and outer membranes and the peptidoglycan layer.

The protein resides in the periplasm. Its function is as follows. Part of the Tol-Pal system, which plays a role in outer membrane invagination during cell division and is important for maintaining outer membrane integrity. The polypeptide is Tol-Pal system protein TolB (Brucella abortus (strain S19)).